A 221-amino-acid polypeptide reads, in one-letter code: Orotate phosphoribosyltransferase (221 aa).

Position 26 (K26) interacts with 5-phospho-alpha-D-ribose 1-diphosphate. Residue 34–35 (FF) participates in orotate binding. 5-phospho-alpha-D-ribose 1-diphosphate contacts are provided by residues 72–73 (YK), R99, K100, K103, H105, and 124–132 (DDVITAGTA). The orotate site is built by T128 and R156.

Belongs to the purine/pyrimidine phosphoribosyltransferase family. PyrE subfamily. In terms of assembly, homodimer. Mg(2+) is required as a cofactor.

The enzyme catalyses orotidine 5'-phosphate + diphosphate = orotate + 5-phospho-alpha-D-ribose 1-diphosphate. Its pathway is pyrimidine metabolism; UMP biosynthesis via de novo pathway; UMP from orotate: step 1/2. Catalyzes the transfer of a ribosyl phosphate group from 5-phosphoribose 1-diphosphate to orotate, leading to the formation of orotidine monophosphate (OMP). This Colwellia psychrerythraea (strain 34H / ATCC BAA-681) (Vibrio psychroerythus) protein is Orotate phosphoribosyltransferase.